The primary structure comprises 121 residues: Putative ferredoxin (121 aa).

It to E.coli YkgJ.

This chain is Putative ferredoxin, found in Acinetobacter calcoaceticus.